The primary structure comprises 207 residues: Casparian strip membrane protein 1 (207 aa).

A2 carries the post-translational modification N-acetylalanine. Residues 2 to 44 (AKESTTIDVGEPNTMTKSTSHVVVDEKKKKGFVAAAAGGGYKR) are Cytoplasmic-facing. A helical membrane pass occupies residues 45 to 65 (GLAVFDFLLRLAAIGITIGAS). Topologically, residues 66–95 (SVMFTAEETLPFFTQFLQFQAGYDDFPTFQ) are extracellular. The helical transmembrane segment at 96–116 (FFVIAIAIVASYLVLSLPFSI) threads the bilayer. Residues 117–128 (VTIVRPLAVAPR) lie on the Cytoplasmic side of the membrane. Residues 129–149 (LILLISDTVVLTLTTAAAAAA) form a helical membrane-spanning segment. Topologically, residues 150-181 (ASIVYLAHNGNTNTNWLPICQQFGDFCQTAST) are extracellular. The helical transmembrane segment at 182–202 (AVVAASISVAFFVLLIVISAI) threads the bilayer. Over 203-207 (ALKRH) the chain is Cytoplasmic.

This sequence belongs to the Casparian strip membrane proteins (CASP) family. As to quaternary structure, homodimer and heterodimers.

Its subcellular location is the cell membrane. Its function is as follows. Regulates membrane-cell wall junctions and localized cell wall deposition. Required for establishment of the Casparian strip membrane domain (CSD) and the subsequent formation of Casparian strips, a cell wall modification of the root endodermis that determines an apoplastic barrier between the intraorganismal apoplasm and the extraorganismal apoplasm and prevents lateral diffusion. The polypeptide is Casparian strip membrane protein 1 (Raphanus raphanistrum (Wild radish)).